Consider the following 451-residue polypeptide: Tubulin beta-1 chain (451 aa).

The MREI motif motif lies at 1-4 (MREI). GTP-binding residues include Gln11, Glu69, Ser138, Gly142, Thr143, and Gly144. Glu69 is a Mg(2+) binding site. Ser172 bears the Phosphoserine; by CDK1 mark. Residues Asn204 and Asn226 each coordinate GTP. A disordered region spans residues 430 to 451 (AGLEDSEEDVEEAEVEAEDKDH). Residues 433 to 451 (EDSEEDVEEAEVEAEDKDH) are compositionally biased toward acidic residues. Ser435 is subject to Phosphoserine. Glu440 bears the 5-glutamyl polyglutamate mark.

It belongs to the tubulin family. In terms of assembly, dimer of alpha and beta chains. A typical microtubule is a hollow water-filled tube with an outer diameter of 25 nm and an inner diameter of 15 nM. Alpha-beta heterodimers associate head-to-tail to form protofilaments running lengthwise along the microtubule wall with the beta-tubulin subunit facing the microtubule plus end conferring a structural polarity. Microtubules usually have 13 protofilaments but different protofilament numbers can be found in some organisms and specialized cells. Interacts with RANBP10. It depends on Mg(2+) as a cofactor. Post-translationally, some glutamate residues at the C-terminus are polyglycylated, resulting in polyglycine chains on the gamma-carboxyl group. Glycylation is mainly limited to tubulin incorporated into axonemes (cilia and flagella) whereas glutamylation is prevalent in neuronal cells, centrioles, axonemes, and the mitotic spindle. Both modifications can coexist on the same protein on adjacent residues, and lowering polyglycylation levels increases polyglutamylation, and reciprocally. Cilia and flagella glycylation is required for their stability and maintenance. Flagella glycylation controls sperm motility. Some glutamate residues at the C-terminus are polyglutamylated, resulting in polyglutamate chains on the gamma-carboxyl group. Polyglutamylation plays a key role in microtubule severing by spastin (SPAST). SPAST preferentially recognizes and acts on microtubules decorated with short polyglutamate tails: severing activity by SPAST increases as the number of glutamates per tubulin rises from one to eight, but decreases beyond this glutamylation threshold. Glutamylation is also involved in cilia motility. In terms of processing, phosphorylated on Ser-172 by CDK1 during the cell cycle, from metaphase to telophase, but not in interphase. This phosphorylation inhibits tubulin incorporation into microtubules.

The protein localises to the cytoplasm. It is found in the cytoskeleton. In terms of biological role, tubulin is the major constituent of microtubules, a cylinder consisting of laterally associated linear protofilaments composed of alpha- and beta-tubulin heterodimers. Microtubules grow by the addition of GTP-tubulin dimers to the microtubule end, where a stabilizing cap forms. Below the cap, tubulin dimers are in GDP-bound state, owing to GTPase activity of alpha-tubulin. The sequence is that of Tubulin beta-1 chain (Tubb1) from Mus musculus (Mouse).